A 2005-amino-acid chain; its full sequence is MSALDEVAKLSQLTNITPDTIFSVLRDRFYAGLPYTALSDSILVSVNPYASSGNRNSDDTLREYTSDYRQTNKQLRAATLPPHIFAHACNAYFYMRRTGQDQSLLMAGDTSSGKSEVRRLALRALIDLSVAPPGKKGSKLGVQIPSAEYILEALGNSRTLENSNASRFGKYTELQFSDSGKLVGAKTLDYYLEKNRVVSAASSERNFHIFHYMVAGASDEEKQYLGIHDAASFRYLGQASRNMDTQDAAKFDRLKLAFKNVGFSKRNVASICQVLAAILHLGNIEFHYDRQRTQDSATIRNPEVLDKVAEYLGISSKSLEEALTYKTKMIRNEVCTILLDADGASDHRDDLAKSLYSLLFAWVNESLNEKLCRDDFDTFIGLLDLPGFQNLSKGNSLDQFCVNFACENLHRFMLRSVFEKRRDEFADEGISHLSPEVPYFDNAETLRLMTNQPGGLIHIMDDQARRMPKKTDQTMIEAFGKRWGNHPSFKVGPADRSGFSSFTISHYNSAVTYTSENLLEKNSEVVSTDFVSLLRGNPQESGKLRNDSSQSSGSTIPFIRGIFNTKVLKTQSHPKNDQTIVAAQQSVKPMRAPSTRRPNRGNTIKRTNTIKKADDDDSDEDAADAADASTSKKNAVRCVAGDFRGALDLLLETLEDTKTWFTLCLRPNDNQLPNQFEARVVKQQITTLGLSEMSRKLLNEYSVSMTYEEFCQRYADVPSLQAVQMRDAVSGEAKQKFSAARQVMSWSDQEAVSGRVKVFLSHTAFRELEDELRAADAEEVKNNEKRAQLDADAAARGESDPFSPVAVLADDYTRSRSNDFVGAYGDPFKERSSVALPLVGRGAAGNEDDLEEVKSQYSGMSGTLARHSFVGGLSGAPSFVASEAYAPSRNMFADMGKNGLNEKAGTAAFTEEPLGEVAEEVGVSSTRRKWVALTWAITFWIPSFILSRFRSLKRPDIRMAWREKLAINLIIWFICACAVFVIVVLGNLICPKQHVYSPTEFASHKGDSSFTAIRGEVFDLSNLVASHKTIVPVVPANSILAYAGEDATPIFPVQVNALCNGVDGNVSPWVQLSNENSTDKHAQYHDFRSYHIDDARPDWYYESMWLLRSNYRVGFMGYTTDGIRDILSEGRAVAIYRGDIYDVSDYIKQGNQGVLRAPDGFQAPANTNRKFMSDAIISLIAQNPGKDITKQLDNLPLDPVVLDRQRVCLRNLYFIGKVDHRNSPQCRFAQYILLALSLFMVAILGFKFLAALQFGRARKPEDHDKFVICQVPCYTEGEESMRKTINSLAALKYDDKRKLLFIICDGMIVGSGNDRPTPRIVLDILGADPNLEPEALSFLSLGEGSKQHNMAKIYSGLYEHHGHVVPYIVVVKCGKPSERSRPGNRGKRDSQLVLMRFLNKVHFGLPMNPMELEIYHQIKNVIGVNPSFYEYILQVDADTEVEAMSLNRFISAFIRDKKVIGLCGETALSNAKASIITMLQVYEYYISHYLAKAFESLFGSVTCLPGCFSMFRIRTPDTHRPLFIASQIVEDYAENRVDTLHTKNLLHLGEDRYLTTLVLKHFGKYKTIFVRDCKAWTVAPDDWKVLLSQRRRWINSTVHNLVELIFTPGLCGFCLFSMRFIVFIDLLSTIIAPVTVCYIVYLIVLVATANGTVPLTAIIMLAAIYGCQAVIFLLNRKFEMIGWMIVYIIGIPIWSLFLPLYSFWHMDDFSWGNTRVVMGEKGQKVVLHEEGTFDPSEIPLQTWTDYENELWERNSARSIGSIIEAARAENKSLGSRAGSQYAPSLYGQPMLPHNASFGHSPSPSYGGTPSQFGAFAPGPGSQIGGSQIGAGAGYFPQDAARQSTYSIGGGYGGQAMSMYGLPPSSSFGVPTGGSGFMPQPFNTTASMYGYPQQVAATQSIYGGSQLGFGGGFATAEQQQQQQQQQQAAGLSGSGGSKSPPREAVAGGLPSDSQIKLDIRSLIAESDLTTITKKQLRAKLEQKYATSIESKKAFINSEIENVLSES.

Residues 5 to 773 (DEVAKLSQLT…AFRELEDELR (769 aa)) enclose the Myosin motor domain. 108–115 (GDTSSGKS) contributes to the ATP binding site. N164, N364, N390, and N546 each carry an N-linked (GlcNAc...) asparagine glycan. Residues 585 to 631 (QSVKPMRAPSTRRPNRGNTIKRTNTIKKADDDDSDEDAADAADASTS) are disordered. The span at 615 to 624 (DDDSDEDAAD) shows a compositional bias: acidic residues. The actin-binding stretch occupies residues 647–669 (LDLLLETLEDTKTWFTLCLRPND). 2 helical membrane passes run 929–949 (KWVA…LSRF) and 965–985 (LAIN…IVVL). N1076 is a glycosylation site (N-linked (GlcNAc...) asparagine). 3 consecutive transmembrane segments (helical) span residues 1232–1252 (ILLA…LAAL), 1604–1624 (LIFT…IVFI), and 1626–1646 (LLST…IVLV). N-linked (GlcNAc...) asparagine glycosylation is present at N1650. 2 helical membrane passes run 1653–1673 (VPLT…VIFL) and 1680–1700 (MIGW…FLPL). N-linked (GlcNAc...) asparagine glycosylation is found at N1770 and N1794. The tract at residues 1796 to 1821 (SFGHSPSPSYGGTPSQFGAFAPGPGS) is disordered. Residues 1797-1811 (FGHSPSPSYGGTPSQ) show a composition bias toward polar residues. An N-linked (GlcNAc...) asparagine glycan is attached at N1882. Positions 1912–1950 (FATAEQQQQQQQQQQAAGLSGSGGSKSPPREAVAGGLPS) are disordered. Low complexity predominate over residues 1917–1930 (QQQQQQQQQQAAGL). The DEK-C domain maps to 1948 to 2003 (LPSDSQIKLDIRSLIAESDLTTITKKQLRAKLEQKYATSIESKKAFINSEIENVLS).

The protein in the N-terminal section; belongs to the TRAFAC class myosin-kinesin ATPase superfamily. Myosin family. This sequence in the C-terminal section; belongs to the chitin synthase family. Class V subfamily.

Its subcellular location is the cell membrane. It localises to the cytoplasmic vesicle membrane. It is found in the cell tip. The catalysed reaction is [(1-&gt;4)-N-acetyl-beta-D-glucosaminyl](n) + UDP-N-acetyl-alpha-D-glucosamine = [(1-&gt;4)-N-acetyl-beta-D-glucosaminyl](n+1) + UDP + H(+). Its function is as follows. Polymerizes chitin, a structural polymer of the cell wall and septum, by transferring the sugar moiety of UDP-GlcNAc to the non-reducing end of the growing chitin polymer. Involved in mating tube and dikaryotic hyphae formation and required for the formation of invading hyphae during plant infection. The sequence is that of Chitin synthase 8 from Mycosarcoma maydis (Corn smut fungus).